Consider the following 476-residue polypeptide: Aspartyl/glutamyl-tRNA(Asn/Gln) amidotransferase subunit B (476 aa).

This sequence belongs to the GatB/GatE family. GatB subfamily. As to quaternary structure, heterotrimer of A, B and C subunits.

The enzyme catalyses L-glutamyl-tRNA(Gln) + L-glutamine + ATP + H2O = L-glutaminyl-tRNA(Gln) + L-glutamate + ADP + phosphate + H(+). It catalyses the reaction L-aspartyl-tRNA(Asn) + L-glutamine + ATP + H2O = L-asparaginyl-tRNA(Asn) + L-glutamate + ADP + phosphate + 2 H(+). In terms of biological role, allows the formation of correctly charged Asn-tRNA(Asn) or Gln-tRNA(Gln) through the transamidation of misacylated Asp-tRNA(Asn) or Glu-tRNA(Gln) in organisms which lack either or both of asparaginyl-tRNA or glutaminyl-tRNA synthetases. The reaction takes place in the presence of glutamine and ATP through an activated phospho-Asp-tRNA(Asn) or phospho-Glu-tRNA(Gln). The chain is Aspartyl/glutamyl-tRNA(Asn/Gln) amidotransferase subunit B from Clostridium kluyveri (strain ATCC 8527 / DSM 555 / NBRC 12016 / NCIMB 10680 / K1).